The chain runs to 2471 residues: Polyprotein P1234 (2471 aa).

In terms of domain architecture, Alphavirus-like MT spans 28-257 (EATQVTDNDH…EERILLRSWH (230 aa)). The tract at residues 242 to 261 (GSTIYTEERILLRSWHLPNV) is nsP1 membrane-binding. The S-palmitoyl cysteine; by host moiety is linked to residue C417. The (+)RNA virus helicase ATP-binding domain maps to 688–839 (DLVDPPFHEF…HEICTEVYHK (152 aa)). A ribonucleoside 5'-triphosphate is bound at residue 719-726 (GVPGSGKS). One can recognise a (+)RNA virus helicase C-terminal domain in the interval 840 to 988 (SISRRCTRTV…LEEWQAEHDA (149 aa)). The Peptidase C9 domain occupies 1001 to 1320 (DVYQNKVHVC…VVLNNIYQGS (320 aa)). The segment at 1002 to 1021 (VYQNKVHVCWAKALEPVLAT) is nucleolus localization signal. C1010 (for cysteine protease nsP2 activity) is an active-site residue. The Nuclear export signal motif lies at 1054–1063 (TRFFGVDIDS). H1079 functions as the For cysteine protease nsP2 activity in the catalytic mechanism. The Nuclear localization signal signature appears at 1177 to 1181 (PGKRV). The Macro domain maps to 1328–1486 (APAYRVIRGD…RIKDAIARKE (159 aa)). D1337, N1351, G1359, G1438, V1439, and Y1440 together coordinate ADP-D-ribose. Zn(2+) is bound by residues C1589, C1591, C1614, and C1632. The segment at 1669–1692 (RRPAPPVPVPARIPSPRCSPAVSM) is disordered. Positions 1670 to 1681 (RPAPPVPVPARI) are enriched in pro residues. Residues 1771–1783 (LITFDSVTDIFEN) form a binding to host G3BP family members region. The interval 1798-1838 (IPAPRRRREPETDIQRFDKSEEKPVPKPRTRTAKYKKPPGV) is disordered. Positions 1805 to 1822 (REPETDIQRFDKSEEKPV) are enriched in basic and acidic residues. Positions 1823–1834 (PKPRTRTAKYKK) are enriched in basic residues. The interval 1835–1851 (PPGVARSISEAELDEFI) is binding to host FXR family members. A RdRp catalytic domain is found at 2228–2343 (DAVLETDIAS…KGVKSDALMA (116 aa)).

As to quaternary structure, interacts with non-structural protein 3. Interacts with RNA-directed RNA polymerase nsP4. Interacts with protease nsP2. interacts with itself. In terms of assembly, interacts with mRNA-capping enzyme nsP1. Interacts with host DDX1. Interacts with host DDX3. Interacts (via C-terminus) with host FXR1; this interaction inhibits the formation of host stress granules on viral mRNAs and the nsp3-FXR1 complexes bind viral RNAs and probably orchestrate the assembly of viral replication complexes. Interacts (via C-terminus) with host FXR2; this interaction inhibits the formation of host stress granules on viral mRNAs and the nsp3-FXR2 complexes bind viral RNAs and probably orchestrate the assembly of viral replication complexes. Interacts (via C-terminus) with host FMR1; this interaction inhibits the formation of host stress granules on viral mRNAs and the nsp3-FMR1 complexes bind viral RNAs and probably orchestrate the assembly of viral replication complexes. Interacts (via C-terminus) with host G3BP1; this interaction inhibits the formation of host stress granules on viral mRNAs and the nsp3-G3BP1 complexes bind viral RNAs and probably orchestrate the assembly of viral replication complexes. Interacts (via C-terminus) with host G3BP2; this interaction inhibits the formation of host stress granules on viral mRNAs and the nsp3-G3BP2 complexes bind viral RNAs and probably orchestrate the assembly of viral replication complexes. Interacts with mRNA-capping enzyme nsP1. Interacts with protease nsP2. interacts with itself. As to quaternary structure, interacts with RNA-directed RNA polymerase nsP4. Interacts with mRNA-capping enzyme nsP1. Interacts with KPNA1/karyopherin-alpha1; this interaction probably allows the active transport of protease nsP2 into the host nucleus. It depends on Mg(2+) as a cofactor. Requires Mn(2+) as cofactor. Specific enzymatic cleavages in vivo yield mature proteins. The processing of the polyprotein is temporally regulated. In early stages (1.7 hpi), P1234 is first cleaved in trans through its nsP2 protease activity, releasing P123' and nsP4, which associate to form the early replication complex. At the same time, P1234 is also cut at the nsP1/nsP2 site early in infection but with lower efficiency. After replication of the viral minus-strand RNAs (4 hpi), the polyproteins are cut at the nsP1/nsP2 and nsP2/nsP3 sites very efficiently, preventing accumulation of P123' and P1234 and allowing the formation of the late replication complex. NsP3'/nsP4 site is not cleaved anymore and P34 is produced rather than nsP4. Post-translationally, specific enzymatic cleavages in vivo yield mature proteins. The processing of the polyprotein is temporally regulated. In early stages (1.7 hpi), P123 is cleaved at the nsP1/nsP2 site with low efficiency. After replication of the viral minus-strand RNAs (4 hpi), the polyproteins are cut at the nsP1/nsP2 and nsP2/nsP3 sites very efficiently, preventing accumulation of P123 and allowing the formation of the late replication complex. In terms of processing, specific enzymatic cleavages in vivo yield mature proteins. The processing of the polyprotein is temporally regulated. In early stages (1.7 hpi), P123' is cleaved at the nsP1/nsP2 site with low efficiency. After replication of the viral minus-strand RNAs (4 hpi), the polyproteins are cut at the nsP1/nsP2 and nsP2/nsP3 sites very efficiently, preventing accumulation of P123' and allowing the formation of the late replication complex. Palmitoylated by host palmitoyltransferases ZDHHC2 and ZDHHC19. Post-translationally, phosphorylated by host on serines and threonines. In terms of processing, ubiquitinated; targets the protein for rapid degradation via the ubiquitin system. Nsp4 is present in extremely low quantities due to low frequency of translation through the amber stop-codon and the degradation by the ubiquitin pathway.

It localises to the host cytoplasmic vesicle membrane. It is found in the host cell membrane. The protein localises to the host cell projection. Its subcellular location is the host filopodium. The protein resides in the host nucleus. It localises to the host cytoplasm. The catalysed reaction is GTP + S-adenosyl-L-methionine = N(7)-methyl-GTP + S-adenosyl-L-homocysteine. The enzyme catalyses N(7)-methyl-GTP + L-histidyl-[protein] = N(tele)-(N(7)-methylguanosine 5'-phospho)-L-histidyl-[protein] + diphosphate. It carries out the reaction N(tele)-(N(7)-methylguanosine 5'-phospho)-L-histidyl-[protein] + a 5'-end diphospho-(purine-ribonucleoside) in mRNA + H(+) = a 5'-end (N(7)-methyl 5'-triphosphoguanosine)-(purine-ribonucleoside) in mRNA + L-histidyl-[protein]. It catalyses the reaction a 5'-end triphospho-ribonucleoside in mRNA + H2O = a 5'-end diphospho-ribonucleoside in mRNA + phosphate + H(+). The catalysed reaction is a ribonucleoside 5'-triphosphate + H2O = a ribonucleoside 5'-diphosphate + phosphate + H(+). The enzyme catalyses ATP + H2O = ADP + phosphate + H(+). It carries out the reaction RNA(n) + a ribonucleoside 5'-triphosphate = RNA(n+1) + diphosphate. It catalyses the reaction 4-O-(ADP-D-ribosyl)-L-aspartyl-[protein] + H2O = L-aspartyl-[protein] + ADP-D-ribose + H(+). The catalysed reaction is 5-O-(ADP-D-ribosyl)-L-glutamyl-[protein] + H2O = L-glutamyl-[protein] + ADP-D-ribose + H(+). The enzyme catalyses RNA(n) + ATP = RNA(n)-3'-adenine ribonucleotide + diphosphate. It carries out the reaction ADP-alpha-D-ribose 1''-phosphate + H2O = ADP-D-ribose + phosphate. Inhibited by sinefungin. Functionally, inactive precursor of the viral replicase, which is activated by cleavages carried out by the viral protease nsP2. In terms of biological role, the early replication complex formed by the polyprotein P123 and nsP4 synthesizes the minus-strand RNAs (antigenome). Polyprotein P123 is a short-lived polyprotein that accumulates during early stage of infection. As soon P123 is cleaved into mature proteins, the plus-strand RNAs synthesis begins. Its function is as follows. The early replication complex formed by the polyprotein P123' and nsP4 synthesizes minus-strand RNAs (antigenome). Polyprotein P123' is a short-lived polyprotein that accumulates during early stage of infection. As soon P123' is cleaved into mature proteins, the plus-strand RNAs synthesis begins. Cytoplasmic capping enzyme that catalyzes two virus-specific reactions: methyltransferase and nsP1 guanylyltransferase. mRNA-capping is necessary since all viral RNAs are synthesized in the cytoplasm, and host capping enzymes are restricted to the nucleus. The enzymatic reaction involves a covalent link between 7-methyl-GMP and nsP1, whereas eukaryotic capping enzymes form a covalent complex only with GMP. NsP1 capping consists in the following reactions: GTP is first methylated into 7-methyl-GMP and then is covalently linked to nsP1 to form the m7GMp-nsP1 complex from which 7-methyl-GMP complex is transferred to the mRNA to create the cap structure. NsP1 is also needed for the initiation of the minus-strand RNAs synthesis. Probably serves as a membrane anchor for the replication complex composed of nsP1-nsP4. Nsp1 is needed for the initiation of the minus-strand RNAs synthesis. Palmitoylated nsP1 is remodeling host cell cytoskeleton, and induces filopodium-like structure formation at the surface of the host cell. Functionally, multifunctional protein whose N-terminus is part of the RNA polymerase complex and displays NTPase, RNA triphosphatase and helicase activities. NTPase and RNA triphosphatase are involved in viral RNA capping and helicase keeps a check on the dsRNA replication intermediates. The C-terminus harbors a protease that specifically cleaves the polyproteins and releases the mature proteins. Required for the shutoff of minus-strand RNAs synthesis. Inhibits host translation to ensure maximal viral gene expression and evade host immune response. In terms of biological role, seems to be essential for minus-strand RNAs and subgenomic 26S mRNAs synthesis. Displays mono-ADP-ribosylhydrolase activity. ADP-ribosylation is a post-translational modification that controls various processes of the host cell and the virus probably needs to revert it for optimal viral replication. Binds proteins of FXR and G3BP families and sequesters them into the viral RNA replication complexes thereby inhibiting the formation of host stress granules on viral mRNAs. The nsp3-FXR and nsp3-G3BP complexes bind viral RNAs and probably orchestrate the assembly of viral replication complexes, thanks to the ability of G3BP and FXR family members to self-assemble and bind DNA. Its function is as follows. Seems to be essential for minus-strand RNAs and subgenomic 26S mRNAs synthesis. Displays mono-ADP-ribosylhydrolase activity. ADP-ribosylation is a post-translational modification that controls various processes of the host cell and the virus probably needs to revert it for optimal viral replication. Binds proteins of FXR and G3BP families and sequesters them into the viral RNA replication complexes thereby inhibiting the formation of host stress granules on viral mRNAs. The nsp3'-FXR and nsp3-G3BP complexes bind viral RNAs and probably orchestrate the assembly of viral replication complexes, thanks to the ability of G3BP and FXR family members to self-assemble and bind DNA. RNA dependent RNA polymerase. Replicates genomic and antigenomic RNA by recognizing replications specific signals. The early replication complex formed by the polyprotein P123 and nsP4 synthesizes minus-strand RNAs. The late replication complex composed of fully processed nsP1-nsP4 is responsible for the production of genomic and subgenomic plus-strand RNAs. This Eastern equine encephalitis virus (strain PE-0.0155) (EEEV) protein is Polyprotein P1234.